The sequence spans 394 residues: Alcohol dehydrogenase-like 3 (394 aa).

Zn(2+)-binding residues include Cys48, Thr50, His71, Cys101, Cys104, Cys107, Cys115, and Cys188. Residues Thr50 and His71 each contribute to the an alcohol site. Thr50 is an NAD(+) binding site. Residues Gly213–Gly218, Asp237, Lys242, Thr283, Val306, Val306–Ile308, Phe333, and Arg383 each bind NAD(+).

It belongs to the zinc-containing alcohol dehydrogenase family. Class-III subfamily. In terms of assembly, homodimer. Zn(2+) serves as cofactor.

Its subcellular location is the cytoplasm. It catalyses the reaction a primary alcohol + NAD(+) = an aldehyde + NADH + H(+). The catalysed reaction is a secondary alcohol + NAD(+) = a ketone + NADH + H(+). The polypeptide is Alcohol dehydrogenase-like 3 (Arabidopsis thaliana (Mouse-ear cress)).